Here is a 116-residue protein sequence, read N- to C-terminus: NADH-ubiquinone oxidoreductase chain 3 (116 aa).

Transmembrane regions (helical) follow at residues 3–23, 56–76, and 85–105; these read LITT…TISF, FFLI…LLPL, and PALT…GLIY.

Belongs to the complex I subunit 3 family.

The protein localises to the mitochondrion membrane. It carries out the reaction a ubiquinone + NADH + 5 H(+)(in) = a ubiquinol + NAD(+) + 4 H(+)(out). Functionally, core subunit of the mitochondrial membrane respiratory chain NADH dehydrogenase (Complex I) that is believed to belong to the minimal assembly required for catalysis. Complex I functions in the transfer of electrons from NADH to the respiratory chain. The immediate electron acceptor for the enzyme is believed to be ubiquinone. The polypeptide is NADH-ubiquinone oxidoreductase chain 3 (MT-ND3) (Salmo salar (Atlantic salmon)).